The primary structure comprises 374 residues: Flagellar P-ring protein (374 aa).

Positions 1 to 29 (MPGVGISRIVRIAVAALVALAPLMTPAHA) are cleaved as a signal peptide.

This sequence belongs to the FlgI family. As to quaternary structure, the basal body constitutes a major portion of the flagellar organelle and consists of four rings (L,P,S, and M) mounted on a central rod.

The protein localises to the periplasm. It localises to the bacterial flagellum basal body. Its function is as follows. Assembles around the rod to form the L-ring and probably protects the motor/basal body from shearing forces during rotation. In Nitrobacter hamburgensis (strain DSM 10229 / NCIMB 13809 / X14), this protein is Flagellar P-ring protein.